The chain runs to 45 residues: Photosystem II reaction center protein K (45 aa).

Residues 1 to 8 (MEAALLLA) constitute a propeptide that is removed on maturation. Residues 24-44 (LPLIPLFFLLLAFVWQAAVGF) form a helical membrane-spanning segment.

The protein belongs to the PsbK family. PSII is composed of 1 copy each of membrane proteins PsbA, PsbB, PsbC, PsbD, PsbE, PsbF, PsbH, PsbI, PsbJ, PsbK, PsbL, PsbM, PsbT, PsbX, PsbY, PsbZ, Psb30/Ycf12, peripheral proteins PsbO, CyanoQ (PsbQ), PsbU, PsbV and a large number of cofactors. It forms dimeric complexes.

The protein localises to the cellular thylakoid membrane. Functionally, one of the components of the core complex of photosystem II (PSII). PSII is a light-driven water:plastoquinone oxidoreductase that uses light energy to abstract electrons from H(2)O, generating O(2) and a proton gradient subsequently used for ATP formation. It consists of a core antenna complex that captures photons, and an electron transfer chain that converts photonic excitation into a charge separation. The chain is Photosystem II reaction center protein K from Picosynechococcus sp. (strain ATCC 27264 / PCC 7002 / PR-6) (Agmenellum quadruplicatum).